Reading from the N-terminus, the 289-residue chain is 33 kDa chaperonin (289 aa).

2 disulfide bridges follow: Cys-230-Cys-232 and Cys-263-Cys-266.

This sequence belongs to the HSP33 family. Under oxidizing conditions two disulfide bonds are formed involving the reactive cysteines. Under reducing conditions zinc is bound to the reactive cysteines and the protein is inactive.

The protein localises to the cytoplasm. Its function is as follows. Redox regulated molecular chaperone. Protects both thermally unfolding and oxidatively damaged proteins from irreversible aggregation. Plays an important role in the bacterial defense system toward oxidative stress. The polypeptide is 33 kDa chaperonin (Shigella flexneri serotype 5b (strain 8401)).